Consider the following 389-residue polypeptide: Packaging protein 3 (389 aa).

The interval 1-131 is interaction with packaging protein 1; it reads MHPVLRQMKP…VKAEVNFQTT (131 aa). Positions 350–389 are disordered; that stretch reads EKENPDGSVSFQQHERGTQSHENGGHAEPAYSRRQLGRFY. The segment covering 362-374 has biased composition (basic and acidic residues); the sequence is QHERGTQSHENGG.

Belongs to the adenoviridae packaging protein 3 family. As to quaternary structure, part of the genome packaging complex composed of packaging proteins 1, 2 and 3; this complex specifically binds to the packaging sequence on the left end of viral genomic DNA and performs packaging of the viral genome. Interacts with hexon-linking protein IIIa; this interaction is required to promote correct genome packaging. Post-translationally, cleaved at different sites by the viral protease during virion maturation.

Its subcellular location is the host nucleus. In terms of biological role, involved in viral genome packaging through its interaction with packaging proteins 1 and 2. After proteolytic cleavage by adenovirus protease, L1 52/55k protein is removed from the capsid during viral maturation. The protein is Packaging protein 3 of Canine adenovirus serotype 1 (strain CLL) (CAdV-1).